The sequence spans 83 residues: MKTIIFFIACLMLIDVVVESKDGYIIEHRGCKYSCFFGTNSWCNTECTLKKGSSGYCAWPACWCYGLPDNVKIFDSNNNKCGK.

An N-terminal signal peptide occupies residues M1 to S20. The LCN-type CS-alpha/beta domain maps to K21–G82. 4 disulfide bridges follow: C31-C81, C35-C57, C43-C62, and C47-C64. C81 is subject to Cysteine amide.

The protein belongs to the long (4 C-C) scorpion toxin superfamily. Sodium channel inhibitor family. Beta subfamily. In terms of tissue distribution, expressed by the venom gland.

Its subcellular location is the secreted. Inhibits the sodium currents (Nav) in an apparent irreversible manner. Produces small depolarization and induces repetitive firing in squid axons. Is specific for arthropods (crickets, triatomides, crabs and squids), but is non-toxic to mice. Shows antibacterial activity against both Gram-positive and Gram-negative bacteria. This chain is Toxin TdNa5, found in Tityus discrepans (Venezuelan scorpion).